The sequence spans 58 residues: Metallothionein-1 (58 aa).

The beta stretch occupies residues 1-28 (PGPCCKDKCECAEGGCKTGCKCTSCRCA). Positions 4, 5, 9, 11, 16, 20, 22, 25, 27, 30, 33, 37, 39, 45, 49, 53, 55, and 56 each coordinate a divalent metal cation. The segment at 29-58 (PCEKCTSGCKCPSKDECAKTCSKPCSCCXX) is alpha.

The protein belongs to the metallothionein superfamily. Type 3 family.

In terms of biological role, metallothioneins have a high content of cysteine residues that bind various heavy metals. The different forms of lobster metallothioneins may have different biological functions. Class I MTS in marine crustacea are involved in the sequestration of elevated levels of heavy-metal ions. Binds 6 metal ions. Known to bind cadmium. The chain is Metallothionein-1 from Homarus americanus (American lobster).